Consider the following 354-residue polypeptide: Transcription termination factor 3, mitochondrial (354 aa).

A mitochondrion-targeting transit peptide spans 1 to 89 (MFCSALRNIL…SFNLAAYVNN (89 aa)).

It belongs to the mTERF family.

The protein localises to the mitochondrion. Binds promoter DNA and regulates initiation of transcription. Regulator of mitochondrial ribosome biogenesis and translation that is essential for development. Required for normal mitochondrial transcription and translation. Required for assembly of mitochondrial respiratory complexes and normal mitochondrial function. Maintains 16S rRNA levels and functions in mitochondrial ribosome assembly by regulating the biogenesis of the 39S ribosomal subunit. The chain is Transcription termination factor 3, mitochondrial from Drosophila melanogaster (Fruit fly).